Consider the following 80-residue polypeptide: U19-lycotoxin-Ls1b (80 aa).

An N-terminal signal peptide occupies residues 1-22; the sequence is MSPKVQALIFIVGLITLLAAHA. Residues 23-34 constitute a propeptide that is removed on maturation; that stretch reads QEELSDNIESER. Intrachain disulfides connect cysteine 36–cysteine 50, cysteine 43–cysteine 55, cysteine 49–cysteine 66, and cysteine 57–cysteine 64.

It belongs to the neurotoxin 02 (plectoxin) family. 05 (U19-lycotoxin) subfamily. As to expression, expressed by the venom gland.

The protein resides in the secreted. The protein is U19-lycotoxin-Ls1b of Lycosa singoriensis (Wolf spider).